We begin with the raw amino-acid sequence, 387 residues long: [LysW]-aminoadipate semialdehyde/glutamate semialdehyde transaminase (387 aa).

Residues 96 to 97 and Phe123 contribute to the pyridoxal 5'-phosphate site; that span reads GT. Arg126 is a binding site for substrate. 207–210 is a pyridoxal 5'-phosphate binding site; the sequence is DEVQ. N6-(pyridoxal phosphate)lysine is present on Lys236. Position 264 (Ser264) interacts with substrate. Thr265 contributes to the pyridoxal 5'-phosphate binding site.

This sequence belongs to the class-III pyridoxal-phosphate-dependent aminotransferase family. LysJ subfamily. In terms of assembly, homodimer. The cofactor is pyridoxal 5'-phosphate.

Its subcellular location is the cytoplasm. The enzyme catalyses [amino-group carrier protein]-C-terminal-gamma-(L-lysyl)-L-glutamate + 2-oxoglutarate = [amino-group carrier protein]-C-terminal-N-(1-carboxy-5-oxopentan-1-yl)-L-glutamine + L-glutamate. The catalysed reaction is [amino-group carrier protein]-C-terminal-gamma-(L-ornithyl)-L-glutamate + 2-oxoglutarate = [amino-group carrier protein]-C-terminal-gamma-(L-glutamyl-5-semialdehyde)-L-glutamate + L-glutamate. It participates in amino-acid biosynthesis; L-lysine biosynthesis via AAA pathway; L-lysine from L-alpha-aminoadipate (Thermus route): step 4/5. The protein operates within amino-acid biosynthesis; L-arginine biosynthesis. In terms of biological role, involved in both the arginine and lysine biosynthetic pathways. The polypeptide is [LysW]-aminoadipate semialdehyde/glutamate semialdehyde transaminase (Sulfurisphaera tokodaii (strain DSM 16993 / JCM 10545 / NBRC 100140 / 7) (Sulfolobus tokodaii)).